Here is a 338-residue protein sequence, read N- to C-terminus: Ketol-acid reductoisomerase (NADP(+)) (338 aa).

Residues methionine 1 to threonine 181 enclose the KARI N-terminal Rossmann domain. Residues tyrosine 24–glutamine 27, lysine 47, serine 50, serine 52, and aspartate 82–glutamine 85 each bind NADP(+). Histidine 107 is a catalytic residue. Residue glycine 133 participates in NADP(+) binding. The 146-residue stretch at serine 182–isoleucine 327 folds into the KARI C-terminal knotted domain. Mg(2+)-binding residues include aspartate 190, glutamate 194, glutamate 226, and glutamate 230. Serine 251 serves as a coordination point for substrate.

Belongs to the ketol-acid reductoisomerase family. It depends on Mg(2+) as a cofactor.

The catalysed reaction is (2R)-2,3-dihydroxy-3-methylbutanoate + NADP(+) = (2S)-2-acetolactate + NADPH + H(+). It catalyses the reaction (2R,3R)-2,3-dihydroxy-3-methylpentanoate + NADP(+) = (S)-2-ethyl-2-hydroxy-3-oxobutanoate + NADPH + H(+). It functions in the pathway amino-acid biosynthesis; L-isoleucine biosynthesis; L-isoleucine from 2-oxobutanoate: step 2/4. It participates in amino-acid biosynthesis; L-valine biosynthesis; L-valine from pyruvate: step 2/4. In terms of biological role, involved in the biosynthesis of branched-chain amino acids (BCAA). Catalyzes an alkyl-migration followed by a ketol-acid reduction of (S)-2-acetolactate (S2AL) to yield (R)-2,3-dihydroxy-isovalerate. In the isomerase reaction, S2AL is rearranged via a Mg-dependent methyl migration to produce 3-hydroxy-3-methyl-2-ketobutyrate (HMKB). In the reductase reaction, this 2-ketoacid undergoes a metal-dependent reduction by NADPH to yield (R)-2,3-dihydroxy-isovalerate. The chain is Ketol-acid reductoisomerase (NADP(+)) from Geobacter sulfurreducens (strain ATCC 51573 / DSM 12127 / PCA).